We begin with the raw amino-acid sequence, 472 residues long: tRNA-2-methylthio-N(6)-dimethylallyladenosine synthase (472 aa).

Positions 1 to 24 (MTGTPDVFPPATPGGTPLVALPAG) are disordered. An MTTase N-terminal domain is found at 33–150 (GKLYIKTHGC…LPELIRARRE (118 aa)). The [4Fe-4S] cluster site is built by Cys-42, Cys-79, Cys-113, Cys-187, Cys-191, and Cys-194. One can recognise a Radical SAM core domain in the interval 173-407 (RADGASAFVS…RINAHAAGIS (235 aa)). One can recognise a TRAM domain in the interval 408–471 (EKMVGTVQTV…TNSLRARVVA (64 aa)).

The protein belongs to the methylthiotransferase family. MiaB subfamily. In terms of assembly, monomer. [4Fe-4S] cluster is required as a cofactor.

Its subcellular location is the cytoplasm. The catalysed reaction is N(6)-dimethylallyladenosine(37) in tRNA + (sulfur carrier)-SH + AH2 + 2 S-adenosyl-L-methionine = 2-methylsulfanyl-N(6)-dimethylallyladenosine(37) in tRNA + (sulfur carrier)-H + 5'-deoxyadenosine + L-methionine + A + S-adenosyl-L-homocysteine + 2 H(+). Functionally, catalyzes the methylthiolation of N6-(dimethylallyl)adenosine (i(6)A), leading to the formation of 2-methylthio-N6-(dimethylallyl)adenosine (ms(2)i(6)A) at position 37 in tRNAs that read codons beginning with uridine. The protein is tRNA-2-methylthio-N(6)-dimethylallyladenosine synthase of Stenotrophomonas maltophilia (strain R551-3).